The following is a 350-amino-acid chain: GDSL esterase/lipase At4g10955 (350 aa).

This sequence belongs to the 'GDSL' lipolytic enzyme family.

The polypeptide is GDSL esterase/lipase At4g10955 (Arabidopsis thaliana (Mouse-ear cress)).